An 87-amino-acid chain; its full sequence is UPF0512 protein B (87 aa).

This sequence belongs to the UPF0512 family.

The polypeptide is UPF0512 protein B (Dictyostelium discoideum (Social amoeba)).